The primary structure comprises 119 residues: Ribosome-binding factor A (119 aa).

Belongs to the RbfA family. Monomer. Binds 30S ribosomal subunits, but not 50S ribosomal subunits or 70S ribosomes.

It is found in the cytoplasm. Its function is as follows. One of several proteins that assist in the late maturation steps of the functional core of the 30S ribosomal subunit. Associates with free 30S ribosomal subunits (but not with 30S subunits that are part of 70S ribosomes or polysomes). Required for efficient processing of 16S rRNA. May interact with the 5'-terminal helix region of 16S rRNA. This is Ribosome-binding factor A from Coxiella burnetii (strain CbuG_Q212) (Coxiella burnetii (strain Q212)).